The primary structure comprises 295 residues: Apolipoprotein E (295 aa).

A signal peptide spans 1–18 (MKVLWAALLVTFLAGCQA). 6 tandem repeats follow at residues 80-101 (TLMDETMKELKAYKSELEEQLS), 102-123 (PVAEETRARLSKELQAAQARLG), 124-145 (ADMEDVRSRLVQYRSEVQAMLG), 146-167 (QSTEELRARLASHLRKLRKRLL), 193-211 (TVGSLASQPLQERAQAKLR), and 212-233 (ARMEEMGSRTRDRLDEVKEQVA). Residues 80–233 (TLMDETMKEL…RLDEVKEQVA (154 aa)) are 6 X 22 AA approximate tandem repeats. Methionine sulfoxide is present on Met143. Ser147 is modified (phosphoserine). The tract at residues 158 to 168 (HLRKLRKRLLR) is LDL and other lipoprotein receptors binding. 162–165 (LRKR) is a heparin binding site. The tract at residues 191-268 (AATVGSLASQ…SWFEPLVEDM (78 aa)) is lipid-binding and lipoprotein association. The segment at 244 to 295 (QQISLQAEAFQARLKSWFEPLVEDMQRQWAGLVEKVQAAVGASTAPVPSDNH) is homooligomerization. Residues 256 to 268 (RLKSWFEPLVEDM) form a specificity for association with VLDL region.

The protein belongs to the apolipoprotein A1/A4/E family. As to quaternary structure, homotetramer. May interact with ABCA1; functionally associated with ABCA1 in the biogenesis of HDLs. May interact with APP/A4 amyloid-beta peptide; the interaction is extremely stable in vitro but its physiological significance is unclear. May interact with MAPT. May interact with MAP2. In the cerebrospinal fluid, interacts with secreted SORL1. Interacts with PMEL; this allows the loading of PMEL luminal fragment on ILVs to induce fibril nucleation. Post-translationally, APOE exists as multiple glycosylated and sialylated glycoforms within cells and in plasma. The extent of glycosylation and sialylation are tissue and context specific. In terms of processing, glycated in plasma VLDL. Phosphorylated by FAM20C in the extracellular medium.

It localises to the secreted. The protein resides in the extracellular space. The protein localises to the extracellular matrix. It is found in the extracellular vesicle. Its subcellular location is the endosome. It localises to the multivesicular body. In terms of biological role, APOE is an apolipoprotein, a protein associating with lipid particles, that mainly functions in lipoprotein-mediated lipid transport between organs via the plasma and interstitial fluids. APOE is a core component of plasma lipoproteins and is involved in their production, conversion and clearance. Apolipoproteins are amphipathic molecules that interact both with lipids of the lipoprotein particle core and the aqueous environment of the plasma. As such, APOE associates with chylomicrons, chylomicron remnants, very low density lipoproteins (VLDL) and intermediate density lipoproteins (IDL) but shows a preferential binding to high-density lipoproteins (HDL). It also binds a wide range of cellular receptors including the LDL receptor/LDLR, the LDL receptor-related proteins LRP1, LRP2 and LRP8 and the very low-density lipoprotein receptor/VLDLR that mediate the cellular uptake of the APOE-containing lipoprotein particles. Finally, APOE also has a heparin-binding activity and binds heparan-sulfate proteoglycans on the surface of cells, a property that supports the capture and the receptor-mediated uptake of APOE-containing lipoproteins by cells. A main function of APOE is to mediate lipoprotein clearance through the uptake of chylomicrons, VLDLs, and HDLs by hepatocytes. APOE is also involved in the biosynthesis by the liver of VLDLs as well as their uptake by peripheral tissues ensuring the delivery of triglycerides and energy storage in muscle, heart and adipose tissues. By participating in the lipoprotein-mediated distribution of lipids among tissues, APOE plays a critical role in plasma and tissues lipid homeostasis. APOE is also involved in two steps of reverse cholesterol transport, the HDLs-mediated transport of cholesterol from peripheral tissues to the liver, and thereby plays an important role in cholesterol homeostasis. First, it is functionally associated with ABCA1 in the biogenesis of HDLs in tissues. Second, it is enriched in circulating HDLs and mediates their uptake by hepatocytes. APOE also plays an important role in lipid transport in the central nervous system, regulating neuron survival and sprouting. This is Apolipoprotein E (APOE) from Macaca mulatta (Rhesus macaque).